The chain runs to 712 residues: Ribosomal RNA large subunit methyltransferase K/L (712 aa).

The 112-residue stretch at 46–157 (GAYQALLHSR…RENMVVSLDL (112 aa)) folds into the THUMP domain.

This sequence belongs to the methyltransferase superfamily. RlmKL family.

It localises to the cytoplasm. It catalyses the reaction guanosine(2445) in 23S rRNA + S-adenosyl-L-methionine = N(2)-methylguanosine(2445) in 23S rRNA + S-adenosyl-L-homocysteine + H(+). The enzyme catalyses guanosine(2069) in 23S rRNA + S-adenosyl-L-methionine = N(2)-methylguanosine(2069) in 23S rRNA + S-adenosyl-L-homocysteine + H(+). In terms of biological role, specifically methylates the guanine in position 2445 (m2G2445) and the guanine in position 2069 (m7G2069) of 23S rRNA. The protein is Ribosomal RNA large subunit methyltransferase K/L of Actinobacillus pleuropneumoniae serotype 3 (strain JL03).